We begin with the raw amino-acid sequence, 67 residues long: UPF0434 protein Tcr_0959 (67 aa).

The protein belongs to the UPF0434 family.

This chain is UPF0434 protein Tcr_0959, found in Hydrogenovibrio crunogenus (strain DSM 25203 / XCL-2) (Thiomicrospira crunogena).